We begin with the raw amino-acid sequence, 295 residues long: Sulfotransferase 1E1 (295 aa).

3'-phosphoadenylyl sulfate is bound at residue 48–53 (KSGTTW). Residue 106–108 (KSH) participates in substrate binding. H108 (proton acceptor) is an active-site residue. R130, S138, and Y193 together coordinate 3'-phosphoadenylyl sulfate. S216 and S228 each carry phosphoserine; by PKA. Residues 227–232 (TSFQEM) and 257–259 (RKG) each bind 3'-phosphoadenylyl sulfate.

It belongs to the sulfotransferase 1 family. In terms of assembly, homodimer.

It localises to the cytoplasm. It is found in the cytosol. The enzyme catalyses estrone + 3'-phosphoadenylyl sulfate = estrone 3-sulfate + adenosine 3',5'-bisphosphate + H(+). It carries out the reaction (24S)-hydroxycholesterol + 3'-phosphoadenylyl sulfate = (24S)-hydroxycholesterol 3-sulfate + adenosine 3',5'-bisphosphate + H(+). The catalysed reaction is 17beta-estradiol + 3'-phosphoadenylyl sulfate = 17beta-estradiol 3-sulfate + adenosine 3',5'-bisphosphate + H(+). It catalyses the reaction 3beta-hydroxyandrost-5-en-17-one + 3'-phosphoadenylyl sulfate = dehydroepiandrosterone 3-sulfate + adenosine 3',5'-bisphosphate + H(+). The enzyme catalyses 4-ethylphenol + 3'-phosphoadenylyl sulfate = 4-ethylphenyl sulfate + adenosine 3',5'-bisphosphate + H(+). Inhibited by estradiol. Sulfotransferase that utilizes 3'-phospho-5'-adenylyl sulfate (PAPS) as sulfonate donor to catalyze the sulfate conjugation of estradiol and estrone. Is a key enzyme in estrogen homeostasis, the sulfation of estrogens leads to their inactivation. Also sulfates dehydroepiandrosterone (DHEA), pregnenolone, (24S)-hydroxycholesterol and xenobiotic compounds like ethinylestradiol, equalenin, diethyl stilbesterol and 1-naphthol at significantly lower efficiency. Does not sulfonate cortisol, testosterone and dopamine. May play a role in gut microbiota-host metabolic interaction. O-sulfonates 4-ethylphenol (4-EP), a dietary tyrosine-derived metabolite produced by gut bacteria. The product 4-EPS crosses the blood-brain barrier and may negatively regulate oligodendrocyte maturation and myelination, affecting the functional connectivity of different brain regions associated with the limbic system. The protein is Sulfotransferase 1E1 (SULT1E1) of Bos taurus (Bovine).